The primary structure comprises 380 residues: uncharacterized protein (380 aa).

A signal peptide spans 1 to 28; sequence MQFLSDTQRMVLSRAVCASFFFFHVAVA. The region spanning 307–380 is the SPOR domain; sequence AGDEKPRGYQ…DAGYETFPLF (74 aa).

This is an uncharacterized protein from Treponema pallidum (strain Nichols).